The chain runs to 634 residues: Chaperone protein dnaK2 (634 aa).

Phosphothreonine; by autocatalysis is present on T197. Over residues 601–623 the composition is skewed to low complexity; that stretch reads GAAAAESGADAGAAGAGDSSSGD. Residues 601-634 are disordered; that stretch reads GAAAAESGADAGAAGAGDSSSGDDVIDAEFTESK. Residues 624–634 show a composition bias toward acidic residues; the sequence is DVIDAEFTESK.

Belongs to the heat shock protein 70 family.

Acts as a chaperone. The chain is Chaperone protein dnaK2 (dnaK2) from Prochlorococcus marinus (strain MIT 9313).